We begin with the raw amino-acid sequence, 361 residues long: Peptide chain release factor 1 (361 aa).

At Gln-237 the chain carries N5-methylglutamine. Residues 286–296 show a composition bias toward basic and acidic residues; sequence EKRRSAEESTR. Residues 286 to 305 are disordered; it reads EKRRSAEESTRRNLVSSGDR.

The protein belongs to the prokaryotic/mitochondrial release factor family. In terms of processing, methylated by PrmC. Methylation increases the termination efficiency of RF1.

The protein localises to the cytoplasm. Peptide chain release factor 1 directs the termination of translation in response to the peptide chain termination codons UAG and UAA. This Shewanella pealeana (strain ATCC 700345 / ANG-SQ1) protein is Peptide chain release factor 1.